A 476-amino-acid chain; its full sequence is Bifunctional protein HldE (476 aa).

The segment at 1 to 318 (MKPILPDYNN…AEAIHGSRDT (318 aa)) is ribokinase. 195 to 198 (NMSE) serves as a coordination point for ATP. The active site involves Asp-264. The tract at residues 344-476 (MTNGCFDILH…IIDAIKGGRG (133 aa)) is cytidylyltransferase.

The protein in the N-terminal section; belongs to the carbohydrate kinase PfkB family. It in the C-terminal section; belongs to the cytidylyltransferase family. In terms of assembly, homodimer.

The enzyme catalyses D-glycero-beta-D-manno-heptose 7-phosphate + ATP = D-glycero-beta-D-manno-heptose 1,7-bisphosphate + ADP + H(+). It catalyses the reaction D-glycero-beta-D-manno-heptose 1-phosphate + ATP + H(+) = ADP-D-glycero-beta-D-manno-heptose + diphosphate. It functions in the pathway nucleotide-sugar biosynthesis; ADP-L-glycero-beta-D-manno-heptose biosynthesis; ADP-L-glycero-beta-D-manno-heptose from D-glycero-beta-D-manno-heptose 7-phosphate: step 1/4. The protein operates within nucleotide-sugar biosynthesis; ADP-L-glycero-beta-D-manno-heptose biosynthesis; ADP-L-glycero-beta-D-manno-heptose from D-glycero-beta-D-manno-heptose 7-phosphate: step 3/4. Its pathway is bacterial outer membrane biogenesis; LPS core biosynthesis. Its function is as follows. Catalyzes the phosphorylation of D-glycero-D-manno-heptose 7-phosphate at the C-1 position to selectively form D-glycero-beta-D-manno-heptose-1,7-bisphosphate. Catalyzes the ADP transfer from ATP to D-glycero-beta-D-manno-heptose 1-phosphate, yielding ADP-D-glycero-beta-D-manno-heptose. The protein is Bifunctional protein HldE of Vibrio vulnificus (strain YJ016).